The sequence spans 489 residues: Rhamnulokinase (489 aa).

13-17 lines the ATP pocket; it reads ASSGR. The cysteines at positions 68 and 222 are disulfide-linked. Substrate is bound by residues Gly-83 and 236–238; that span reads HDT. Catalysis depends on Asp-237, which acts as the Proton acceptor. ATP is bound at residue Thr-259. Residue Asn-296 participates in substrate binding. An ATP-binding site is contributed by Gln-304. Cys-353 and Cys-370 are joined by a disulfide. Gly-402 is an ATP binding site. Residues Cys-413 and Cys-417 are joined by a disulfide bond.

This sequence belongs to the rhamnulokinase family. It depends on Mg(2+) as a cofactor.

The enzyme catalyses L-rhamnulose + ATP = L-rhamnulose 1-phosphate + ADP + H(+). The protein operates within carbohydrate degradation; L-rhamnose degradation; glycerone phosphate from L-rhamnose: step 2/3. Its function is as follows. Involved in the catabolism of L-rhamnose (6-deoxy-L-mannose). Catalyzes the transfer of the gamma-phosphate group from ATP to the 1-hydroxyl group of L-rhamnulose to yield L-rhamnulose 1-phosphate. This is Rhamnulokinase from Shigella flexneri serotype 5b (strain 8401).